A 429-amino-acid chain; its full sequence is MSEITDVYAREILDSRGNPTLEVEVFLESGVMGRAAVPSGASTGEREALELRDGDKSRYLGKGVLKAVDNVNNIIAEQIIGMEATDQIGIDQRMLDLDGTEYKSNLGANAILGVSLAVAKAAAEEVGLPLYQYIGGSNAKELPLPMMNILNGGAHADNNVDIQEFMIMPAGAKSFAEALRMGAEIFHALKGVLKGKGYNTAVGDEGGFAPNLKSNEEALEVIMDAIQKAGYKPGEEVLLALDVASSELFNDGVYTLENEAEPKKTPAQMVDFYENLVNKYPIVSIEDGMAENDWDGWKLLTDRLGKRIQIVGDDLFVTNPRILKEGIQKGIANSILIKLNQIGSLTETLDAIEMAKRAGYTCVISHRSGETEDTTLADLSVAVNAGQIKTGSLCRTDRVAKYNQLLRIEDELDTTALFRGKDVFYNIRK.

Gln163 serves as a coordination point for (2R)-2-phosphoglycerate. Glu205 serves as the catalytic Proton donor. Mg(2+) contacts are provided by Asp242, Glu286, and Asp313. Residues Lys338, Arg367, Ser368, and Lys389 each coordinate (2R)-2-phosphoglycerate. Lys338 (proton acceptor) is an active-site residue.

Belongs to the enolase family. Mg(2+) is required as a cofactor.

It localises to the cytoplasm. It is found in the secreted. The protein resides in the cell surface. It carries out the reaction (2R)-2-phosphoglycerate = phosphoenolpyruvate + H2O. Its pathway is carbohydrate degradation; glycolysis; pyruvate from D-glyceraldehyde 3-phosphate: step 4/5. Catalyzes the reversible conversion of 2-phosphoglycerate (2-PG) into phosphoenolpyruvate (PEP). It is essential for the degradation of carbohydrates via glycolysis. In Geobacter metallireducens (strain ATCC 53774 / DSM 7210 / GS-15), this protein is Enolase.